A 266-amino-acid chain; its full sequence is Glutamate racemase 1 (266 aa).

Residues 11-12 (DS) and 43-44 (YG) each bind substrate. Catalysis depends on Cys74, which acts as the Proton donor/acceptor. 75-76 (NT) contributes to the substrate binding site. Cys182 functions as the Proton donor/acceptor in the catalytic mechanism. Residue 183–184 (TH) coordinates substrate.

This sequence belongs to the aspartate/glutamate racemases family.

It catalyses the reaction L-glutamate = D-glutamate. It participates in cell wall biogenesis; peptidoglycan biosynthesis. In terms of biological role, provides the (R)-glutamate required for cell wall biosynthesis. This chain is Glutamate racemase 1, found in Caldanaerobacter subterraneus subsp. tengcongensis (strain DSM 15242 / JCM 11007 / NBRC 100824 / MB4) (Thermoanaerobacter tengcongensis).